We begin with the raw amino-acid sequence, 153 residues long: MLLRDLVLRHGCCWPSLLLHCALHPLWGLVQVTHAEPQKSCSKVTDSCQHICQCRPPPPLPPPPPPPPPPRLLSAPAPNSTSCPAEDSWWSGLVIIVAVVCASLVFLTVLVIICYKAIKRKPLRKDENGASVAEYPMSSSPSNKGVDVNAAVV.

An N-terminal signal peptide occupies residues 1-35 (MLLRDLVLRHGCCWPSLLLHCALHPLWGLVQVTHA). Residues 36–92 (EPQKSCSKVTDSCQHICQCRPPPPLPPPPPPPPPPRLLSAPAPNSTSCPAEDSWWSG) are Extracellular-facing. One can recognise a PRAD domain in the interval 56–70 (PPPPLPPPPPPPPPP). The segment covering 59 to 71 (PLPPPPPPPPPPR) has biased composition (pro residues). A disordered region spans residues 59–79 (PLPPPPPPPPPPRLLSAPAPN). Asn-79 carries an N-linked (GlcNAc...) asparagine glycan. A helical transmembrane segment spans residues 93-113 (LVIIVAVVCASLVFLTVLVII). Over 114–153 (CYKAIKRKPLRKDENGASVAEYPMSSSPSNKGVDVNAAVV) the chain is Cytoplasmic. The segment at 133-153 (AEYPMSSSPSNKGVDVNAAVV) is disordered.

In terms of assembly, interacts with ACHE, probably through disulfide bonds. In terms of tissue distribution, isoforms 1 and 2 are expressed in the adult brain. In matured cortical neurons, only isoform 1 is detectable.

It is found in the cell membrane. The protein localises to the cell junction. It localises to the synapse. Functionally, required to anchor acetylcholinesterase (ACHE) to the basal lamina of the neuromuscular junction and to the membrane of neuronal synapses in brain. Organizes ACHE into tetramers. This Rattus norvegicus (Rat) protein is Proline-rich membrane anchor 1 (Prima1).